Here is a 313-residue protein sequence, read N- to C-terminus: MRVPIAVVGPTATGKSELGLALAEHLDGEIVNIDAMQLYRGMDIGTAKLPVAERRGIPHHQLDVLDVTETASVATYQRNAAADVEAILARGRTPVIVGGSMMYVQALLDDWEFPATDPAVRAKWERLLATEGVAAVHAALRAADPAAAATILPTDGRRMVRALEVVELTGKPFAASAPRIGTPRWGTIILGVDRDTAELDERIARRTALMFDSGLVAEVRGLVERGLREGVTARRAIGYAHVLAYLDNEYDLEHAKERTLIGTRRYVRRQRSWFRRDPRVRWLDGADPGLVTTALALLGDAAAAPATTERTTQ.

9–16 lines the ATP pocket; the sequence is GPTATGKS. Substrate is bound at residue 11 to 16; sequence TATGKS.

It belongs to the IPP transferase family. In terms of assembly, monomer. Mg(2+) is required as a cofactor.

The catalysed reaction is adenosine(37) in tRNA + dimethylallyl diphosphate = N(6)-dimethylallyladenosine(37) in tRNA + diphosphate. Functionally, catalyzes the transfer of a dimethylallyl group onto the adenine at position 37 in tRNAs that read codons beginning with uridine, leading to the formation of N6-(dimethylallyl)adenosine (i(6)A). In Nocardia farcinica (strain IFM 10152), this protein is tRNA dimethylallyltransferase.